A 206-amino-acid chain; its full sequence is Large ribosomal subunit protein uL4 (206 aa).

Residues 46 to 77 (GTRAQKDREQVRHSTKKPFKQKGTGRARAGMT) are disordered. A compositionally biased stretch (basic residues) spans 58–70 (HSTKKPFKQKGTG).

It belongs to the universal ribosomal protein uL4 family. Part of the 50S ribosomal subunit.

Its function is as follows. One of the primary rRNA binding proteins, this protein initially binds near the 5'-end of the 23S rRNA. It is important during the early stages of 50S assembly. It makes multiple contacts with different domains of the 23S rRNA in the assembled 50S subunit and ribosome. Forms part of the polypeptide exit tunnel. The polypeptide is Large ribosomal subunit protein uL4 (Polaromonas naphthalenivorans (strain CJ2)).